The primary structure comprises 5043 residues: Polyketide synthase PksJ (5043 aa).

The tract at residues 141–481 (AVITDRGMHQ…ELPEIETSYT (341 aa)) is adenylation 1. A Carrier 1 domain is found at 590-667 (RVREEIQKHL…RLASYLSEHE (78 aa)). Ser627 is modified (O-(pantetheine 4'-phosphoryl)serine). The segment at 690–989 (QATFQPLSEV…NMLPIRSELN (300 aa)) is condensation. The interval 1181–1578 (TYRELDEKST…EHPGILECVV (398 aa)) is adenylation 2. A Carrier 2 domain is found at 1654 to 1729 (TSPKNIQDTV…NISQYITEQR (76 aa)). Ser1689 bears the O-(pantetheine 4'-phosphoryl)serine mark. The 427-residue stretch at 1760–2186 (DDSVAIIGIS…GTNTHAIFEQ (427 aa)) folds into the Ketosynthase family 3 (KS3) 1 domain. Residues Cys1932, His2068, and His2108 each act as for beta-ketoacyl synthase 1 activity in the active site. The N-terminal hotdog fold stretch occupies residues 2374 to 2499 (HPLLHQNTSD…GSAELASAAE (126 aa)). One can recognise a PKS/mFAS DH domain in the interval 2374–2661 (HPLLHQNTSD…TRVLEGEVHT (288 aa)). The active-site Proton acceptor; for dehydratase activity is His2403. Positions 2513–2661 (GKGKMSPDQF…TRVLEGEVHT (149 aa)) are C-terminal hotdog fold. Asp2575 (proton donor; for dehydratase activity) is an active-site residue. 2 consecutive Carrier domains span residues 3114–3188 (RKLE…VAAY) and 3212–3286 (SSLE…TVEH). An O-(pantetheine 4'-phosphoryl)serine mark is found at Ser3148 and Ser3246. The segment at 3291–3314 (VQEREKPEGQEELQTKSSEAPKIT) is disordered. In terms of domain architecture, Ketosynthase family 3 (KS3) 2 spans 3339–3779 (FEPVAIVGIS…GVNAHIVIEE (441 aa)). Residues Cys3511, His3646, and His3695 each act as for beta-ketoacyl synthase 2 activity in the active site. A coiled-coil region spans residues 3839 to 3872 (REEMDERLACVAGTMQELEEKLQAFVDGKEETDE). The Carrier 5 domain maps to 4459-4536 (GLLSETQSWL…RFADWLIGSY (78 aa)). Ser4496 carries the post-translational modification O-(pantetheine 4'-phosphoryl)serine. A Ketosynthase family 3 (KS3) 3 domain is found at 4588 to 4992 (AEGIAVVGLS…GTNAHVIVEA (405 aa)). Residue Cys4743 is the For beta-ketoacyl synthase 3 activity of the active site.

This sequence belongs to the ATP-dependent AMP-binding enzyme family. The cofactor is pantetheine 4'-phosphate.

The protein resides in the cytoplasm. It functions in the pathway antibiotic biosynthesis; bacillaene biosynthesis. Functionally, involved in some intermediate steps for the synthesis of the antibiotic polyketide bacillaene which is involved in secondary metabolism. This chain is Polyketide synthase PksJ (pksJ), found in Bacillus subtilis (strain 168).